The following is a 1005-amino-acid chain: Myosin IE heavy chain (1005 aa).

The 686-residue stretch at 8–693 folds into the Myosin motor domain; that stretch reads EGVPDFVLLN…TLFYFEEKRE (686 aa). 101-108 contributes to the ATP binding site; the sequence is GESGAGKT. The disordered stretch occupies residues 539–562; it reads SDPLVQGLFPPTRPEDSKKRPETA. The span at 551-560 shows a compositional bias: basic and acidic residues; it reads RPEDSKKRPE. The segment at 556–630 is actin-binding; it reads KKRPETAGSQ…RAGFAGRIEY (75 aa). 2 consecutive IQ domains span residues 694 to 722 and 716 to 745; these read LEMP…RKAA and WNQR…HRAF. Residues 810–1004 enclose the TH1 domain; sequence KKKWDFRRHF…KGNQATIQFK (195 aa).

It belongs to the TRAFAC class myosin-kinesin ATPase superfamily. Myosin family. Myosin I heavy chain is single-headed. Dimer of a heavy and a light chain. Inability to self-assemble into filaments.

Functionally, myosin is a protein that binds to actin and has ATPase activity that is activated by actin. May play a role in moving membranes relative to actin. This chain is Myosin IE heavy chain (myoE), found in Dictyostelium discoideum (Social amoeba).